Consider the following 142-residue polypeptide: Putative thiosulfate sulfurtransferase, mitochondrial (142 aa).

The transit peptide at 1 to 25 (MFSKTLSVSRLLMTRSFYSSTVVKN) directs the protein to the mitochondrion. The region spanning 43–140 (GDKSTVLIDV…SWLEWSDKIK (98 aa)) is the Rhodanese domain. Cys104 (cysteine persulfide intermediate) is an active-site residue.

The protein localises to the mitochondrion. It carries out the reaction thiosulfate + hydrogen cyanide = thiocyanate + sulfite + 2 H(+). Its function is as follows. Thiosulfate sulfurtransferase which catalyzes the transfer of sulfane sulfur from thiosulfate to cyanide. The protein is Putative thiosulfate sulfurtransferase, mitochondrial of Schizosaccharomyces pombe (strain 972 / ATCC 24843) (Fission yeast).